The sequence spans 673 residues: DNA ligase (673 aa).

NAD(+) is bound by residues 38–42 (DSVYD), 87–88 (SL), and glutamate 119. Lysine 121 (N6-AMP-lysine intermediate) is an active-site residue. 4 residues coordinate NAD(+): arginine 142, glutamate 179, lysine 296, and lysine 320. The Zn(2+) site is built by cysteine 414, cysteine 417, cysteine 432, and cysteine 438. The 79-residue stretch at 595–673 (VVKSEIAGKT…EEAFLKLLKS (79 aa)) folds into the BRCT domain.

This sequence belongs to the NAD-dependent DNA ligase family. LigA subfamily. Mg(2+) serves as cofactor. The cofactor is Mn(2+).

It catalyses the reaction NAD(+) + (deoxyribonucleotide)n-3'-hydroxyl + 5'-phospho-(deoxyribonucleotide)m = (deoxyribonucleotide)n+m + AMP + beta-nicotinamide D-nucleotide.. Functionally, DNA ligase that catalyzes the formation of phosphodiester linkages between 5'-phosphoryl and 3'-hydroxyl groups in double-stranded DNA using NAD as a coenzyme and as the energy source for the reaction. It is essential for DNA replication and repair of damaged DNA. This is DNA ligase from Coxiella burnetii (strain CbuK_Q154) (Coxiella burnetii (strain Q154)).